The chain runs to 470 residues: Acetyl-CoA decarbonylase/synthase complex subunit gamma 1 (470 aa).

Residues 1-60 (MKINSPLEAYKYLPQTNCGECGQPTCMAFASTLIDRSGKTTDCPPLIKEKKFAKKLAELD) enclose the 4Fe-4S domain. The [4Fe-4S] cluster site is built by cysteine 18, cysteine 21, cysteine 26, and cysteine 43.

As to quaternary structure, heterodimer of delta and gamma chains. The ACDS complex is made up of alpha, epsilon, beta, gamma and delta chains with a probable stoichiometry of (alpha(2)epsilon(2))(4)-beta(8)-(gamma(1)delta(1))(8). Corrinoid is required as a cofactor. Requires [4Fe-4S] cluster as cofactor.

The enzyme catalyses 5,6,7,8-tetrahydrosarcinapterin + methyl-Co(III)-[corrinoid Fe-S protein] = 5-methyltetrahydrosarcinapterin + Co(I)-[corrinoid Fe-S protein] + H(+). Its pathway is one-carbon metabolism; methanogenesis from acetate. Part of a complex that catalyzes the reversible cleavage of acetyl-CoA, allowing growth on acetate as sole source of carbon and energy. In Methanosarcina mazei (strain ATCC BAA-159 / DSM 3647 / Goe1 / Go1 / JCM 11833 / OCM 88) (Methanosarcina frisia), this protein is Acetyl-CoA decarbonylase/synthase complex subunit gamma 1.